The following is a 187-amino-acid chain: Phospholipase A2-gamma (187 aa).

A signal peptide spans 1–25; sequence MITGLALSRVAFGLTAFLLLAVVSS. Intrachain disulfides connect cysteine 29-cysteine 56, cysteine 33-cysteine 62, cysteine 38-cysteine 115, cysteine 49-cysteine 69, cysteine 68-cysteine 93, and cysteine 75-cysteine 86. Ca(2+) is bound by residues tyrosine 48, glycine 50, and tyrosine 53. Histidine 72 is a catalytic residue. Aspartate 73 serves as a coordination point for Ca(2+).

Belongs to the phospholipase A2 family. The cofactor is Ca(2+). In terms of tissue distribution, strongly expressed in mature flowers but weakly expressed in other tissues. Detected in buds, open flowers and in pollen.

It is found in the secreted. It localises to the golgi apparatus. Its subcellular location is the trans-Golgi network. The protein resides in the endoplasmic reticulum. It carries out the reaction a 1,2-diacyl-sn-glycero-3-phosphocholine + H2O = a 1-acyl-sn-glycero-3-phosphocholine + a fatty acid + H(+). Its function is as follows. PA2 catalyzes the calcium-dependent hydrolysis of the 2-acyl groups in 3-sn-phosphoglycerides. Releases lysophospholipids (LPLs) and free fatty acids (FFAs) from membrane phospholipids in response to hormones and other external stimuli. Plays a role in pollen development and germination and tube growth. The polypeptide is Phospholipase A2-gamma (PLA2-GAMMA) (Arabidopsis thaliana (Mouse-ear cress)).